Reading from the N-terminus, the 31-residue chain is Large ribosomal subunit protein bL21 (31 aa).

This sequence belongs to the bacterial ribosomal protein bL21 family. As to quaternary structure, part of the 50S ribosomal subunit. Contacts protein L20.

Functionally, this protein binds to 23S rRNA in the presence of protein L20. In Streptococcus thermophilus, this protein is Large ribosomal subunit protein bL21 (rplU).